A 111-amino-acid polypeptide reads, in one-letter code: Iron-sulfur cluster insertion protein ErpA (111 aa).

Cysteine 39, cysteine 103, and cysteine 105 together coordinate iron-sulfur cluster.

Belongs to the HesB/IscA family. As to quaternary structure, homodimer. Iron-sulfur cluster serves as cofactor.

Functionally, required for insertion of 4Fe-4S clusters for at least IspG. This is Iron-sulfur cluster insertion protein ErpA from Acinetobacter baumannii (strain SDF).